Consider the following 212-residue polypeptide: Uridine kinase (212 aa).

13 to 20 is a binding site for ATP; the sequence is GASASGKS.

The protein belongs to the uridine kinase family.

Its subcellular location is the cytoplasm. It carries out the reaction uridine + ATP = UMP + ADP + H(+). The catalysed reaction is cytidine + ATP = CMP + ADP + H(+). Its pathway is pyrimidine metabolism; CTP biosynthesis via salvage pathway; CTP from cytidine: step 1/3. It functions in the pathway pyrimidine metabolism; UMP biosynthesis via salvage pathway; UMP from uridine: step 1/1. This Shewanella frigidimarina (strain NCIMB 400) protein is Uridine kinase.